Consider the following 314-residue polypeptide: Aspartate carbamoyltransferase catalytic subunit (314 aa).

Arg63 and Thr64 together coordinate carbamoyl phosphate. Lys91 serves as a coordination point for L-aspartate. Carbamoyl phosphate is bound by residues Arg113, His143, and Gln146. Residues Arg176 and Arg228 each coordinate L-aspartate. The carbamoyl phosphate site is built by Ala269 and Pro270.

The protein belongs to the aspartate/ornithine carbamoyltransferase superfamily. ATCase family. Heterododecamer (2C3:3R2) of six catalytic PyrB chains organized as two trimers (C3), and six regulatory PyrI chains organized as three dimers (R2).

The enzyme catalyses carbamoyl phosphate + L-aspartate = N-carbamoyl-L-aspartate + phosphate + H(+). It functions in the pathway pyrimidine metabolism; UMP biosynthesis via de novo pathway; (S)-dihydroorotate from bicarbonate: step 2/3. Functionally, catalyzes the condensation of carbamoyl phosphate and aspartate to form carbamoyl aspartate and inorganic phosphate, the committed step in the de novo pyrimidine nucleotide biosynthesis pathway. In Cutibacterium acnes (strain DSM 16379 / KPA171202) (Propionibacterium acnes), this protein is Aspartate carbamoyltransferase catalytic subunit.